A 247-amino-acid chain; its full sequence is Segregation and condensation protein A (247 aa).

This sequence belongs to the ScpA family. In terms of assembly, component of a cohesin-like complex composed of ScpA, ScpB and the Smc homodimer, in which ScpA and ScpB bind to the head domain of Smc. The presence of the three proteins is required for the association of the complex with DNA.

The protein resides in the cytoplasm. Participates in chromosomal partition during cell division. May act via the formation of a condensin-like complex containing Smc and ScpB that pull DNA away from mid-cell into both cell halves. The polypeptide is Segregation and condensation protein A (Bacillus anthracis (strain A0248)).